Reading from the N-terminus, the 156-residue chain is Regulatory protein RecX (156 aa).

The protein belongs to the RecX family.

The protein resides in the cytoplasm. In terms of biological role, modulates RecA activity. This Pseudomonas putida (strain ATCC 700007 / DSM 6899 / JCM 31910 / BCRC 17059 / LMG 24140 / F1) protein is Regulatory protein RecX.